The following is a 196-amino-acid chain: Protein GrpE (196 aa).

A disordered region spans residues 1–24 (MAENERTTENFQPQDPSYAEAATT).

This sequence belongs to the GrpE family. Homodimer.

It is found in the cytoplasm. In terms of biological role, participates actively in the response to hyperosmotic and heat shock by preventing the aggregation of stress-denatured proteins, in association with DnaK and GrpE. It is the nucleotide exchange factor for DnaK and may function as a thermosensor. Unfolded proteins bind initially to DnaJ; upon interaction with the DnaJ-bound protein, DnaK hydrolyzes its bound ATP, resulting in the formation of a stable complex. GrpE releases ADP from DnaK; ATP binding to DnaK triggers the release of the substrate protein, thus completing the reaction cycle. Several rounds of ATP-dependent interactions between DnaJ, DnaK and GrpE are required for fully efficient folding. The chain is Protein GrpE from Gloeobacter violaceus (strain ATCC 29082 / PCC 7421).